The chain runs to 393 residues: Homeobox protein knotted-1-like 4 (393 aa).

Over residues Met-1–Asp-13 the composition is skewed to polar residues. Disordered regions lie at residues Met-1 to Trp-39 and Gln-81 to Glu-114. The ELK domain occupies Glu-286–Ile-306. The homeobox; TALE-type DNA-binding region spans Leu-307–Asn-370. The tract at residues Arg-363–Arg-393 is disordered. A compositionally biased stretch (polar residues) spans His-368–Ser-377.

The protein belongs to the TALE/KNOX homeobox family. May form heterodimeric complex with the TALE/BELL proteins. Interacts with OFP1, OFP2, OFP4 and OFP12. Interacts with KNATM-B.

Its subcellular location is the nucleus. This Arabidopsis thaliana (Mouse-ear cress) protein is Homeobox protein knotted-1-like 4 (KNAT4).